Reading from the N-terminus, the 439-residue chain is Exodeoxyribonuclease 7 large subunit (439 aa).

The protein belongs to the XseA family. Heterooligomer composed of large and small subunits.

The protein localises to the cytoplasm. The enzyme catalyses Exonucleolytic cleavage in either 5'- to 3'- or 3'- to 5'-direction to yield nucleoside 5'-phosphates.. Its function is as follows. Bidirectionally degrades single-stranded DNA into large acid-insoluble oligonucleotides, which are then degraded further into small acid-soluble oligonucleotides. In Haemophilus influenzae (strain ATCC 51907 / DSM 11121 / KW20 / Rd), this protein is Exodeoxyribonuclease 7 large subunit.